The chain runs to 173 residues: NADH-ubiquinone oxidoreductase chain 6 (173 aa).

5 consecutive transmembrane segments (helical) span residues 1–21 (MTYFVLFLGLCFVLGGLAVAS), 27–47 (YGVVGLVLASVAGCGWFLSLG), 48–68 (ASFVSLVLFMVYLGGMLVVFV), 87–107 (VIGYGMGFAMVLVVGVVIGGF), and 139–159 (WGAGMFLVAGWGLLLTLFVVL).

Belongs to the complex I subunit 6 family.

The protein localises to the mitochondrion membrane. The catalysed reaction is a ubiquinone + NADH + 5 H(+)(in) = a ubiquinol + NAD(+) + 4 H(+)(out). Core subunit of the mitochondrial membrane respiratory chain NADH dehydrogenase (Complex I) that is believed to belong to the minimal assembly required for catalysis. Complex I functions in the transfer of electrons from NADH to the respiratory chain. The immediate electron acceptor for the enzyme is believed to be ubiquinone. The polypeptide is NADH-ubiquinone oxidoreductase chain 6 (MT-ND6) (Brachyramphus brevirostris (Kittlitz's murrelet)).